A 252-amino-acid chain; its full sequence is 5-oxoprolinase subunit A 1 (252 aa).

Belongs to the LamB/PxpA family. In terms of assembly, forms a complex composed of PxpA, PxpB and PxpC.

It carries out the reaction 5-oxo-L-proline + ATP + 2 H2O = L-glutamate + ADP + phosphate + H(+). In terms of biological role, catalyzes the cleavage of 5-oxoproline to form L-glutamate coupled to the hydrolysis of ATP to ADP and inorganic phosphate. The chain is 5-oxoprolinase subunit A 1 from Pseudomonas putida (strain ATCC 47054 / DSM 6125 / CFBP 8728 / NCIMB 11950 / KT2440).